The chain runs to 834 residues: Protein translocase subunit SecA (834 aa).

ATP-binding positions include glutamine 85, glycine 103–threonine 107, and aspartate 491. Zn(2+)-binding residues include cysteine 818, cysteine 820, cysteine 829, and cysteine 830.

It belongs to the SecA family. As to quaternary structure, monomer and homodimer. Part of the essential Sec protein translocation apparatus which comprises SecA, SecYEG and auxiliary proteins SecDF. Other proteins may also be involved. Zn(2+) serves as cofactor.

The protein resides in the cell membrane. It localises to the cytoplasm. It catalyses the reaction ATP + H2O + cellular proteinSide 1 = ADP + phosphate + cellular proteinSide 2.. Part of the Sec protein translocase complex. Interacts with the SecYEG preprotein conducting channel. Has a central role in coupling the hydrolysis of ATP to the transfer of proteins into and across the cell membrane, serving as an ATP-driven molecular motor driving the stepwise translocation of polypeptide chains across the membrane. This Clostridium kluyveri (strain ATCC 8527 / DSM 555 / NBRC 12016 / NCIMB 10680 / K1) protein is Protein translocase subunit SecA.